Here is a 544-residue protein sequence, read N- to C-terminus: Chaperonin GroEL (544 aa).

Residues threonine 29–proline 32, lysine 50, aspartate 86–threonine 90, glycine 414, aspartate 477–alanine 479, and aspartate 493 contribute to the ATP site.

The protein belongs to the chaperonin (HSP60) family. In terms of assembly, forms a cylinder of 14 subunits composed of two heptameric rings stacked back-to-back. Interacts with the co-chaperonin GroES.

The protein resides in the cytoplasm. The catalysed reaction is ATP + H2O + a folded polypeptide = ADP + phosphate + an unfolded polypeptide.. Together with its co-chaperonin GroES, plays an essential role in assisting protein folding. The GroEL-GroES system forms a nano-cage that allows encapsulation of the non-native substrate proteins and provides a physical environment optimized to promote and accelerate protein folding. The sequence is that of Chaperonin GroEL from Hydrogenovibrio crunogenus (strain DSM 25203 / XCL-2) (Thiomicrospira crunogena).